A 1073-amino-acid polypeptide reads, in one-letter code: Probable lipase MIL1 (1073 aa).

Disordered regions lie at residues 1–151 (MSDS…AVSS) and 163–190 (LTSK…KSVN). 2 stretches are compositionally biased toward basic and acidic residues: residues 54 to 81 (QAKE…EAGK) and 101 to 121 (GIDR…HDTD). An APM2-interacting WQEMP motif motif is present at residues 143–147 (WQEMP). 3 N-linked (GlcNAc...) asparagine glycosylation sites follow: N190, N229, and N236. The tract at residues 230–267 (SSQTSVNLTSSPSTTSLNNEKNNDDDDDDSYDEYEDDV) is disordered. Low complexity predominate over residues 233–249 (TSVNLTSSPSTTSLNNE). Over residues 252–267 (NDDDDDDSYDEYEDDV) the composition is skewed to acidic residues. N280 carries an N-linked (GlcNAc...) asparagine glycan. Residues 292–312 (FAYVGAINILANQMCTNLATL) form a helical membrane-spanning segment. Positions 385-448 (NPWENDRDHE…SDVPGKVLDP (64 aa)) are disordered. The segment covering 404-427 (RMSPNEQNGSVQASTPDPEQSATP) has biased composition (polar residues). N-linked (GlcNAc...) asparagine glycosylation is present at N411. S435 carries the phosphoserine modification. A helical transmembrane segment spans residues 457 to 477 (LNIDVAWTIICDLFLICLQSS). N495 carries an N-linked (GlcNAc...) asparagine glycan. A run of 2 helical transmembrane segments spans residues 553-573 (LVLG…IAAG) and 577-597 (IGIT…VVAV). N-linked (GlcNAc...) asparagine glycosylation is present at N726. The chain crosses the membrane as a helical span at residues 818–838 (WFLAYLFRAAAGGFSAVMGIS). N850 is a glycosylation site (N-linked (GlcNAc...) asparagine). Disordered stretches follow at residues 942–968 (GRDM…EGIA) and 1010–1073 (KEVE…PDDI). Residues 1027 to 1037 (PSTPKINPPQS) show a composition bias toward pro residues. Residue S1037 is modified to Phosphoserine.

Belongs to the TMCO4 family. As to quaternary structure, interacts with RPP0. Interacts with APM2.

The protein localises to the golgi apparatus membrane. The protein resides in the early endosome membrane. Its subcellular location is the cytoplasmic vesicle. It localises to the clathrin-coated vesicle membrane. Functionally, probable lipase that recruits the AP-1-related (AP-1R) complex to membranes via interaction with APM2. The AP-1R complex is an adapter protein complex that mediates of cargo protein SNC1 sorting in clathrin-coated vesicles. This is Probable lipase MIL1 from Saccharomyces cerevisiae (strain ATCC 204508 / S288c) (Baker's yeast).